Here is a 134-residue protein sequence, read N- to C-terminus: Interleukin-5 (134 aa).

The N-terminal stretch at 1–19 is a signal peptide; sequence MRMLLHLSLLALGAAYVSA. Residues N76 and N90 are each glycosylated (N-linked (GlcNAc...) asparagine).

The protein belongs to the IL-5 family. In terms of assembly, homodimer; disulfide-linked. Interacts with IL5RA. Interacts with CSF2RB.

It is found in the secreted. Functionally, homodimeric cytokine expressed predominantly by T-lymphocytes and NK cells that plays an important role in the survival, differentiation, and chemotaxis of eosinophils. Also acts on activated and resting B-cells to induce immunoglobulin production, growth, and differentiation. Mechanistically, exerts its biological effects through a receptor composed of IL5RA subunit and the cytokine receptor common subunit beta/CSF2RB. Binding to the receptor leads to activation of various kinases including LYN, SYK and JAK2 and thereby propagates signals through the RAS-MAPK and JAK-STAT5 pathways respectively. This is Interleukin-5 (IL5) from Felis catus (Cat).